The primary structure comprises 99 residues: Large ribosomal subunit protein bL21 (99 aa).

The protein belongs to the bacterial ribosomal protein bL21 family. In terms of assembly, part of the 50S ribosomal subunit. Contacts protein L20.

In terms of biological role, this protein binds to 23S rRNA in the presence of protein L20. The sequence is that of Large ribosomal subunit protein bL21 from Acholeplasma laidlawii (strain PG-8A).